The primary structure comprises 253 residues: Maleate isomerase (253 aa).

Substrate is bound by residues asparagine 14, 80–82 (CLV), tyrosine 137, and asparagine 167. Cysteine 80 serves as the catalytic Nucleophile. Position 80 is an S-(2-succinyl)cysteine (cysteine 80). Catalysis depends on cysteine 198, which acts as the Proton donor. 199-200 (VQ) is a binding site for substrate.

The protein belongs to the maleate isomerase family. As to quaternary structure, homodimer.

It carries out the reaction maleate = fumarate. Catalyzes cis-trans isomerization of the C2-C3 double bond in maleate to yield fumarate. The protein is Maleate isomerase of Alcaligenes faecalis.